The following is a 64-amino-acid chain: Phylloxin-S1 (64 aa).

The N-terminal stretch at 1–22 (MVFLKKSLLLVLFVGLVSLSIC) is a signal peptide. The propeptide occupies 23 to 44 (EENKREEHEEVEENAEKAEEKR). Glutamine 63 is subject to Glutamine amide.

Expressed by the skin glands.

The protein resides in the secreted. In terms of biological role, antimicrobial peptide against both Gram-positive and Gram-negative bacteria. This Phyllomedusa sauvagei (Sauvage's leaf frog) protein is Phylloxin-S1.